A 354-amino-acid chain; its full sequence is GTPase Obg (354 aa).

The Obg domain maps to 1 to 159 (MKFLDQCKIY…RWIWLRLKLI (159 aa)). Residues 160-328 (ADVGLVGLPN…LLRAAYKQVR (169 aa)) form the OBG-type G domain. GTP-binding positions include 166 to 173 (GLPNAGKS), 191 to 195 (FTTLT), 213 to 216 (DIPG), 280 to 283 (NKID), and 309 to 311 (SGV). Ser-173 and Thr-193 together coordinate Mg(2+). Acidic residues predominate over residues 335-345 (EEEIDDDEDHV). The interval 335-354 (EEEIDDDEDHVDETPGGWTP) is disordered.

It belongs to the TRAFAC class OBG-HflX-like GTPase superfamily. OBG GTPase family. Monomer. Mg(2+) is required as a cofactor.

Its subcellular location is the cytoplasm. Functionally, an essential GTPase which binds GTP, GDP and possibly (p)ppGpp with moderate affinity, with high nucleotide exchange rates and a fairly low GTP hydrolysis rate. Plays a role in control of the cell cycle, stress response, ribosome biogenesis and in those bacteria that undergo differentiation, in morphogenesis control. The chain is GTPase Obg from Caulobacter vibrioides (strain ATCC 19089 / CIP 103742 / CB 15) (Caulobacter crescentus).